Here is a 555-residue protein sequence, read N- to C-terminus: Formate--tetrahydrofolate ligase (555 aa).

Residue 64 to 71 (TKAGIGKT) participates in ATP binding.

Belongs to the formate--tetrahydrofolate ligase family.

It carries out the reaction (6S)-5,6,7,8-tetrahydrofolate + formate + ATP = (6R)-10-formyltetrahydrofolate + ADP + phosphate. It functions in the pathway one-carbon metabolism; tetrahydrofolate interconversion. This chain is Formate--tetrahydrofolate ligase, found in Parabacteroides distasonis (strain ATCC 8503 / DSM 20701 / CIP 104284 / JCM 5825 / NCTC 11152).